The following is a 956-amino-acid chain: Probable hypoxanthine oxidase XdhD (956 aa).

Mo-molybdopterin contacts are provided by glutamine 414, phenylalanine 445, and alanine 727.

Belongs to the xanthine dehydrogenase family. Requires [2Fe-2S] cluster as cofactor. Mo-molybdopterin is required as a cofactor.

Its function is as follows. Probably has no xanthine dehydrogenase activity; however deletion results in increased adenine sensitivity, suggesting that this protein contributes to the conversion of adenine to guanine nucleotides during purine salvage. This is Probable hypoxanthine oxidase XdhD (xdhD) from Escherichia coli O157:H7.